A 515-amino-acid polypeptide reads, in one-letter code: Ecdysteroid UDP-glucosyltransferase (515 aa).

A signal peptide spans 1–31; the sequence is MKMIILVVSLHVLRNSAAVRVLCMFPTPSYS.

This sequence belongs to the UDP-glycosyltransferase family.

Its function is as follows. Catalyzes the transfer of glucose from UDP-glucose to ecdysteroids which are insect molting hormones. Expression of egt interferes with normal insect development and block molting. The protein is Ecdysteroid UDP-glucosyltransferase (EGT) of Spodoptera littoralis nuclear polyhedrosis virus (SlNPV).